The following is a 288-amino-acid chain: S-methyl-5'-thioadenosine phosphorylase (288 aa).

Residues serine 10, 52-53, and 85-86 contribute to the phosphate site; these read RH and TA. Methionine 188 is a binding site for substrate. Phosphate is bound at residue threonine 189. Residue 212–214 coordinates substrate; the sequence is DYD.

The protein belongs to the PNP/MTAP phosphorylase family. MTAP subfamily. In terms of assembly, homotrimer.

The protein localises to the cytoplasm. It is found in the nucleus. The catalysed reaction is S-methyl-5'-thioadenosine + phosphate = 5-(methylsulfanyl)-alpha-D-ribose 1-phosphate + adenine. It functions in the pathway amino-acid biosynthesis; L-methionine biosynthesis via salvage pathway; S-methyl-5-thio-alpha-D-ribose 1-phosphate from S-methyl-5'-thioadenosine (phosphorylase route): step 1/1. Its function is as follows. Catalyzes the reversible phosphorylation of S-methyl-5'-thioadenosine (MTA) to adenine and 5-methylthioribose-1-phosphate. Involved in the breakdown of MTA, a major by-product of polyamine biosynthesis. Responsible for the first step in the methionine salvage pathway after MTA has been generated from S-adenosylmethionine. Has broad substrate specificity with 6-aminopurine nucleosides as preferred substrates. This chain is S-methyl-5'-thioadenosine phosphorylase, found in Caenorhabditis elegans.